The primary structure comprises 451 residues: Phosphoglucosamine mutase (451 aa).

Ser102 (phosphoserine intermediate) is an active-site residue. The Mg(2+) site is built by Ser102, Asp242, Asp244, and Asp246. At Ser102 the chain carries Phosphoserine.

The protein belongs to the phosphohexose mutase family. Mg(2+) is required as a cofactor. In terms of processing, activated by phosphorylation.

The enzyme catalyses alpha-D-glucosamine 1-phosphate = D-glucosamine 6-phosphate. Functionally, catalyzes the conversion of glucosamine-6-phosphate to glucosamine-1-phosphate. The chain is Phosphoglucosamine mutase from Staphylococcus aureus (strain Mu3 / ATCC 700698).